Consider the following 295-residue polypeptide: Protease HtpX (295 aa).

A run of 2 helical transmembrane segments spans residues 4–24 (ILLFVATNLAVVLVASITLSL) and 41–61 (SSLLVFCAVFGFAGSLVSLFI). Zn(2+) is bound at residue His147. Residue Glu148 is part of the active site. Position 151 (His151) interacts with Zn(2+). 2 helical membrane-spanning segments follow: residues 158-178 (VTLALVQGVVNTFVMFFARII) and 199-219 (VATIVAELILGILASMIVMWF). Glu224 is a binding site for Zn(2+).

Belongs to the peptidase M48B family. It depends on Zn(2+) as a cofactor.

Its subcellular location is the cell inner membrane. The polypeptide is Protease HtpX (Pseudomonas putida (strain ATCC 47054 / DSM 6125 / CFBP 8728 / NCIMB 11950 / KT2440)).